A 164-amino-acid polypeptide reads, in one-letter code: Phosphopantetheine adenylyltransferase (164 aa).

Residue threonine 9 coordinates substrate. Residues 9 to 10 (TF) and histidine 17 each bind ATP. Residues lysine 41, threonine 76, and arginine 90 each coordinate substrate. ATP-binding positions include 91 to 93 (GLR), glutamate 101, and 126 to 132 (YQFVSSS).

This sequence belongs to the bacterial CoaD family. In terms of assembly, homohexamer. It depends on Mg(2+) as a cofactor.

It is found in the cytoplasm. The enzyme catalyses (R)-4'-phosphopantetheine + ATP + H(+) = 3'-dephospho-CoA + diphosphate. The protein operates within cofactor biosynthesis; coenzyme A biosynthesis; CoA from (R)-pantothenate: step 4/5. In terms of biological role, reversibly transfers an adenylyl group from ATP to 4'-phosphopantetheine, yielding dephospho-CoA (dPCoA) and pyrophosphate. The protein is Phosphopantetheine adenylyltransferase of Coprothermobacter proteolyticus (strain ATCC 35245 / DSM 5265 / OCM 4 / BT).